Reading from the N-terminus, the 339-residue chain is Lipoate-protein ligase A (339 aa).

The BPL/LPL catalytic domain occupies 29 to 216 (DPSQQVLFLW…SFENFYAGKA (188 aa)). Residues R71, 76 to 79 (GAVF), and K134 contribute to the ATP site. K134 contributes to the (R)-lipoate binding site.

Belongs to the LplA family. Monomer.

Its subcellular location is the cytoplasm. It carries out the reaction L-lysyl-[lipoyl-carrier protein] + (R)-lipoate + ATP = N(6)-[(R)-lipoyl]-L-lysyl-[lipoyl-carrier protein] + AMP + diphosphate + H(+). The protein operates within protein modification; protein lipoylation via exogenous pathway; protein N(6)-(lipoyl)lysine from lipoate: step 1/2. It functions in the pathway protein modification; protein lipoylation via exogenous pathway; protein N(6)-(lipoyl)lysine from lipoate: step 2/2. Functionally, catalyzes both the ATP-dependent activation of exogenously supplied lipoate to lipoyl-AMP and the transfer of the activated lipoyl onto the lipoyl domains of lipoate-dependent enzymes. This chain is Lipoate-protein ligase A, found in Bdellovibrio bacteriovorus (strain ATCC 15356 / DSM 50701 / NCIMB 9529 / HD100).